The sequence spans 694 residues: Elongation factor G 2 (694 aa).

Residues 6–282 (SKLRNIGISA…GVVDYLPDPT (277 aa)) enclose the tr-type G domain. GTP contacts are provided by residues 15–22 (AHIDSGKT), 82–86 (DTPGH), and 136–139 (NKCD).

It belongs to the TRAFAC class translation factor GTPase superfamily. Classic translation factor GTPase family. EF-G/EF-2 subfamily.

The protein localises to the cytoplasm. Functionally, catalyzes the GTP-dependent ribosomal translocation step during translation elongation. During this step, the ribosome changes from the pre-translocational (PRE) to the post-translocational (POST) state as the newly formed A-site-bound peptidyl-tRNA and P-site-bound deacylated tRNA move to the P and E sites, respectively. Catalyzes the coordinated movement of the two tRNA molecules, the mRNA and conformational changes in the ribosome. The chain is Elongation factor G 2 from Anaeromyxobacter dehalogenans (strain 2CP-C).